The primary structure comprises 483 residues: Islet cell autoantigen 1 (483 aa).

Residues 51-254 (ASDADLDAKL…TSHTMAAIHE (204 aa)) form the AH domain. Positions 281-321 (EEKKKINQQESTDAAVQEPSQLISLEEENQRKESSSFKTED) are disordered. The segment covering 288 to 303 (QQESTDAAVQEPSQLI) has biased composition (polar residues). The segment covering 308–321 (ENQRKESSSFKTED) has biased composition (basic and acidic residues).

As to expression, expressed abundantly in pancreas, heart and brain with low levels of expression in lung, kidney, liver and thyroid.

It is found in the cytoplasm. It localises to the cytosol. The protein resides in the golgi apparatus membrane. The protein localises to the cytoplasmic vesicle. Its subcellular location is the secretory vesicle membrane. It is found in the secretory vesicle. It localises to the synaptic vesicle membrane. May play a role in neurotransmitter secretion. This is Islet cell autoantigen 1 (ICA1) from Homo sapiens (Human).